Consider the following 423-residue polypeptide: Probable histone-binding protein rbbD (423 aa).

6 WD repeats span residues 119-159, 172-212, 222-262, 266-306, 310-350, and 367-407; these read NHEG…LEPT, GHKK…KSDS, GHTS…KPIH, AHNS…NRLH, SHTD…EEQN, and GHTS…YNDR.

Belongs to the WD repeat RBAP46/RBAP48/MSI1 family. As to quaternary structure, probably binds directly to helix 1 of the histone fold of histone H4, a region that is not accessible when H4 is in chromatin.

It is found in the nucleus. Functionally, core histone-binding subunit that may target chromatin assembly factors, chromatin remodeling factors and histone deacetylases to their histone substrates in a manner that is regulated by nucleosomal DNA. Component of several complexes which regulate chromatin metabolism. This Dictyostelium discoideum (Social amoeba) protein is Probable histone-binding protein rbbD (rbbD).